Here is a 287-residue protein sequence, read N- to C-terminus: Small ribosomal subunit biogenesis GTPase RsgA (287 aa).

The region spanning 61 to 218 is the CP-type G domain; sequence SSELIRPTVA…LVDTPGFTTL (158 aa). GTP is bound by residues 110–113 and 161–169; these read NKED and GPSGAGKST. Residues C242, C247, H249, and C255 each coordinate Zn(2+).

Belongs to the TRAFAC class YlqF/YawG GTPase family. RsgA subfamily. As to quaternary structure, monomer. Associates with 30S ribosomal subunit, binds 16S rRNA. It depends on Zn(2+) as a cofactor.

The protein resides in the cytoplasm. Its function is as follows. One of several proteins that assist in the late maturation steps of the functional core of the 30S ribosomal subunit. Helps release RbfA from mature subunits. May play a role in the assembly of ribosomal proteins into the subunit. Circularly permuted GTPase that catalyzes slow GTP hydrolysis, GTPase activity is stimulated by the 30S ribosomal subunit. The protein is Small ribosomal subunit biogenesis GTPase RsgA of Clostridium perfringens (strain SM101 / Type A).